A 104-amino-acid chain; its full sequence is Co-chaperonin GroES 5 (104 aa).

The protein belongs to the GroES chaperonin family. As to quaternary structure, heptamer of 7 subunits arranged in a ring. Interacts with the chaperonin GroEL.

Its subcellular location is the cytoplasm. In terms of biological role, together with the chaperonin GroEL, plays an essential role in assisting protein folding. The GroEL-GroES system forms a nano-cage that allows encapsulation of the non-native substrate proteins and provides a physical environment optimized to promote and accelerate protein folding. GroES binds to the apical surface of the GroEL ring, thereby capping the opening of the GroEL channel. The protein is Co-chaperonin GroES 5 of Rhizobium meliloti (strain 1021) (Ensifer meliloti).